The sequence spans 79 residues: Large ribosomal subunit protein uL29 (79 aa).

It belongs to the universal ribosomal protein uL29 family.

The protein is Large ribosomal subunit protein uL29 of Tropheryma whipplei (strain Twist) (Whipple's bacillus).